The chain runs to 318 residues: Ribosomal RNA small subunit methyltransferase H (318 aa).

S-adenosyl-L-methionine is bound by residues 34 to 36 (GGH), aspartate 57, leucine 91, aspartate 110, and glutamine 117.

The protein belongs to the methyltransferase superfamily. RsmH family.

The protein localises to the cytoplasm. The enzyme catalyses cytidine(1402) in 16S rRNA + S-adenosyl-L-methionine = N(4)-methylcytidine(1402) in 16S rRNA + S-adenosyl-L-homocysteine + H(+). Specifically methylates the N4 position of cytidine in position 1402 (C1402) of 16S rRNA. In Chlorobaculum parvum (strain DSM 263 / NCIMB 8327) (Chlorobium vibrioforme subsp. thiosulfatophilum), this protein is Ribosomal RNA small subunit methyltransferase H.